A 122-amino-acid polypeptide reads, in one-letter code: Small ribosomal subunit protein uS13 (122 aa).

Residues 94–122 (GLPVRGQSTQKNARTRKGPRKTVAGKKGK) are disordered. Positions 106 to 122 (ARTRKGPRKTVAGKKGK) are enriched in basic residues.

It belongs to the universal ribosomal protein uS13 family. In terms of assembly, part of the 30S ribosomal subunit. Forms a loose heterodimer with protein S19. Forms two bridges to the 50S subunit in the 70S ribosome.

Located at the top of the head of the 30S subunit, it contacts several helices of the 16S rRNA. In the 70S ribosome it contacts the 23S rRNA (bridge B1a) and protein L5 of the 50S subunit (bridge B1b), connecting the 2 subunits; these bridges are implicated in subunit movement. Contacts the tRNAs in the A and P-sites. In Mycoplasmopsis synoviae (strain 53) (Mycoplasma synoviae), this protein is Small ribosomal subunit protein uS13.